The sequence spans 462 residues: 7-hydroxymethyl chlorophyll a reductase, chloroplastic (462 aa).

A chloroplast-targeting transit peptide spans 1-20 (MITVVTSRLSLLPPVFSVVN).

It belongs to the FrhB family. Interacts with SGR1, the chlorophyll catabolic enzymes (CCEs) NYC1, NOL and RCCR, and the LHCII complex. Part of a SGR1-CCE-LHCII complex, which acts in chlorophyll breakdown. It depends on FAD as a cofactor. Iron-sulfur cluster serves as cofactor.

Its subcellular location is the plastid. The protein localises to the chloroplast. It carries out the reaction chlorophyll a + 2 oxidized [2Fe-2S]-[ferredoxin] + H2O = 7(1)-hydroxychlorophyll a + 2 reduced [2Fe-2S]-[ferredoxin] + 2 H(+). Probable iron-sulfur flavoprotein that converts 7-hydroxymethyl chlorophyll a to chlorophyll a using ferredoxin as a reducing equivalent. Catalyzes the reduction of a hydroxymethyl group to a methyl group. Belongs to the chlorophyll catabolic enzymes (CCEs). The polypeptide is 7-hydroxymethyl chlorophyll a reductase, chloroplastic (HCAR) (Arabidopsis thaliana (Mouse-ear cress)).